Reading from the N-terminus, the 629-residue chain is MFYQDPFDVIIIGGGHAGTEAAMAAARMGQQTLLLTHNIDTLGQMSCNPAIGGIGKGHLVKEVDALGGLMAKAIDQAGIQFRILNASKGPAVRATRAQADRVLYRQAVRTALENQPNLMIFQQAVEDLIVENDRVVGAVTQMGLKFRAKAVVLTVGTFLDGKIHIGLDNYSGGRAGDPPSIPLSRRLRELPLRVSRLKTGTPPRIDARTIDFSVLAQQHGDNPMPVFSFMGNASQHPQQVPCYITHTNEKTHDVIRNNLDRSPMYAGVIEGIGPRYCPSIEDKVMRFADRNQHQIFLEPEGLTSNEIYPNGISTSLPFDVQMQIVRSMQGMENAKIVRPGYAIEYDFFDPRDLKPTLESKFIHGLFFAGQINGTTGYEEAAAQGLLAGLNAARLSADKEGWAPARSQAYLGVLVDDLCTLGTKEPYRMFTSRAEYRLMLREDNADLRLTEMGRELGLVDDERWARFNEKLENIERERQRLKSTWVTPSAESADEVNAHLTTPLSREASGEDLLRRPEMTYAQLTSLAAFAPALEDEQAAEQVEIQVKYEGYIARQQDEIEKQLRNENTLLPATLDYRQVSGLSNEVIAKLNDHKPASIGQASRISGVTPAAISILLVWLKKQGMLRRSA.

Residues 13–18 (GGGHAG), Val125, and Ser180 each bind FAD. 273 to 287 (GPRYCPSIEDKVMRF) is a binding site for NAD(+). FAD is bound at residue Gln370.

Belongs to the MnmG family. Homodimer. Heterotetramer of two MnmE and two MnmG subunits. The cofactor is FAD.

The protein resides in the cytoplasm. Functionally, NAD-binding protein involved in the addition of a carboxymethylaminomethyl (cmnm) group at the wobble position (U34) of certain tRNAs, forming tRNA-cmnm(5)s(2)U34. The polypeptide is tRNA uridine 5-carboxymethylaminomethyl modification enzyme MnmG (Salmonella agona (strain SL483)).